The primary structure comprises 333 residues: Glyceraldehyde-3-phosphate dehydrogenase (333 aa).

An N-acetylserine modification is found at serine 1. NAD(+) contacts are provided by residues 10-11, aspartate 31, and methionine 76; that span reads RI. D-glyceraldehyde 3-phosphate-binding positions include 147–149, threonine 178, 207–208, and arginine 230; these read SCT and TG. Cysteine 148 (nucleophile) is an active-site residue. Asparagine 312 is a binding site for NAD(+).

This sequence belongs to the glyceraldehyde-3-phosphate dehydrogenase family. As to quaternary structure, homotetramer.

It localises to the cytoplasm. The enzyme catalyses D-glyceraldehyde 3-phosphate + phosphate + NAD(+) = (2R)-3-phospho-glyceroyl phosphate + NADH + H(+). Its pathway is carbohydrate degradation; glycolysis; pyruvate from D-glyceraldehyde 3-phosphate: step 1/5. The polypeptide is Glyceraldehyde-3-phosphate dehydrogenase (Panulirus versicolor (Painted spiny lobster)).